The primary structure comprises 255 residues: MPEIRTFLCRSDNIGVLLHDPVTSACAAIDVPEAGAVLRALKETGWRLTDILVTHRHFDHVEGIPEVKARTGARVTAPAKAGDAVPEVDATVREGDVVKVGSLVGTVWETPGHCADHVTYWFERERLAFAGDTLFTLGCGRVMESPPEVLWRSLSRFLALPDETAIYSGHDYVLSNARFALAADPDNSNLKARAELAERVKRDGRFLIPTTLGEEKATNPFLRAGEPALARSVDMAPGSDPAAVFAALREWKNRF.

Zn(2+) contacts are provided by His-55, His-57, Asp-59, His-60, His-113, Asp-132, and His-170.

It belongs to the metallo-beta-lactamase superfamily. Glyoxalase II family. As to quaternary structure, monomer. Zn(2+) is required as a cofactor.

The enzyme catalyses an S-(2-hydroxyacyl)glutathione + H2O = a 2-hydroxy carboxylate + glutathione + H(+). It participates in secondary metabolite metabolism; methylglyoxal degradation; (R)-lactate from methylglyoxal: step 2/2. Functionally, thiolesterase that catalyzes the hydrolysis of S-D-lactoyl-glutathione to form glutathione and D-lactic acid. The sequence is that of Hydroxyacylglutathione hydrolase from Methylobacterium nodulans (strain LMG 21967 / CNCM I-2342 / ORS 2060).